Consider the following 333-residue polypeptide: Phosphate acyltransferase (333 aa).

The protein belongs to the PlsX family. As to quaternary structure, homodimer. Probably interacts with PlsY.

It localises to the cytoplasm. The enzyme catalyses a fatty acyl-[ACP] + phosphate = an acyl phosphate + holo-[ACP]. Its pathway is lipid metabolism; phospholipid metabolism. Catalyzes the reversible formation of acyl-phosphate (acyl-PO(4)) from acyl-[acyl-carrier-protein] (acyl-ACP). This enzyme utilizes acyl-ACP as fatty acyl donor, but not acyl-CoA. In Ligilactobacillus salivarius (strain UCC118) (Lactobacillus salivarius), this protein is Phosphate acyltransferase.